Reading from the N-terminus, the 149-residue chain is D-aminoacyl-tRNA deacylase (149 aa).

Positions 139-140 match the Gly-cisPro motif, important for rejection of L-amino acids motif; it reads GP.

This sequence belongs to the DTD family. As to quaternary structure, homodimer.

It is found in the cytoplasm. The enzyme catalyses glycyl-tRNA(Ala) + H2O = tRNA(Ala) + glycine + H(+). It catalyses the reaction a D-aminoacyl-tRNA + H2O = a tRNA + a D-alpha-amino acid + H(+). An aminoacyl-tRNA editing enzyme that deacylates mischarged D-aminoacyl-tRNAs. Also deacylates mischarged glycyl-tRNA(Ala), protecting cells against glycine mischarging by AlaRS. Acts via tRNA-based rather than protein-based catalysis; rejects L-amino acids rather than detecting D-amino acids in the active site. By recycling D-aminoacyl-tRNA to D-amino acids and free tRNA molecules, this enzyme counteracts the toxicity associated with the formation of D-aminoacyl-tRNA entities in vivo and helps enforce protein L-homochirality. The protein is D-aminoacyl-tRNA deacylase (dtd1) of Schizosaccharomyces pombe (strain 972 / ATCC 24843) (Fission yeast).